The chain runs to 791 residues: Protein CLASP-2 (791 aa).

Composition is skewed to low complexity over residues 259-271 (ASDA…SVNS), 323-334 (RTPNTRPMTTRT), and 372-381 (SQPGSRNGSP). Disordered stretches follow at residues 259–283 (ASDA…SKLS), 315–391 (TRMT…TGTL), and 422–454 (AMNT…PQKS). Polar residues predominate over residues 422 to 434 (AMNTAKESLGQPS).

The protein belongs to the CLASP family. Interacts with hcp-1 and hcp-2.

It is found in the cytoplasm. The protein localises to the cytoskeleton. It localises to the microtubule organizing center. Its subcellular location is the centrosome. The protein resides in the chromosome. It is found in the centromere. The protein localises to the kinetochore. It localises to the spindle. Functionally, probable microtubule plus-end tracking protein that promotes the stabilization of dynamic microtubules. Required for the formation of mitotic and meiotic spindles. Specifically promotes the polymerization of kinetochore-bound microtubules. Also required for cytoplasmic streaming. This chain is Protein CLASP-2 (cls-2), found in Caenorhabditis briggsae.